Here is a 231-residue protein sequence, read N- to C-terminus: Somatolactin-2 (231 aa).

The N-terminal stretch at 1–24 (MRMMRAIKQGQWAILLWPYLLTTS) is a signal peptide. 3 disulfide bridges follow: Cys29-Cys39, Cys89-Cys205, and Cys222-Cys230. Asn145 is a glycosylation site (N-linked (GlcNAc...) asparagine).

This sequence belongs to the somatotropin/prolactin family. In terms of tissue distribution, pituitary gland.

The protein localises to the secreted. This chain is Somatolactin-2, found in Sparus aurata (Gilthead sea bream).